Consider the following 1003-residue polypeptide: Glutamate receptor ionotropic, NMDA 3B (1003 aa).

The first 24 residues, 1–24 (MECVQTLWLSLALALARGSWVVRG), serve as a signal peptide directing secretion. Residues 25-574 (HPQPCGVPTR…PIGAFMWPLH (550 aa)) lie on the Extracellular side of the membrane. N-linked (GlcNAc...) asparagine glycans are attached at residues Asn-69, Asn-212, Asn-344, Asn-451, and Asn-465. Intrachain disulfides connect Cys-439–Cys-475 and Cys-445–Cys-476. Glycine is bound by residues Ser-531, Ser-533, and Arg-538. D-serine-binding residues include Ser-533 and Arg-538. The helical transmembrane segment at 575–594 (WSMWVGVFAALHLTALFLTL) threads the bilayer. At 595 to 615 (YEWRSPYGLTPRGRNRGTVFS) the chain is on the cytoplasmic side. The segment at residues 616–627 (YSSALNLCYAIL) is an intramembrane region (discontinuously helical). At 628–641 (FGRTVSSKTPKCPT) the chain is on the cytoplasmic side. Residues 642-661 (GRFLMNLWAIFCLLVLSSYT) traverse the membrane as a helical segment. Residues 662–832 (ANLAAVMVGD…TLQMGVYHLS (171 aa)) lie on the Extracellular side of the membrane. Ser-701 is a binding site for glycine. D-serine is bound by residues Ser-701, Ala-702, and Asp-745. Asp-745 is a glycine binding site. N-linked (GlcNAc...) asparagine glycosylation occurs at Asn-786. A helical membrane pass occupies residues 833–848 (GLFVLLCLGLGSALLT). Residues 849–1003 (SLGEHVFYRL…RLLHAAPAES (155 aa)) lie on the Cytoplasmic side of the membrane. Residues 883–912 (LNTGPPEGQQERAEQECSGPKEEQPAADGA) form a disordered region. Over residues 891-906 (QQERAEQECSGPKEEQ) the composition is skewed to basic and acidic residues. Positions 947 to 986 (SNGPGVQAELRELELRIEAARERLRSALLRRGELRAQLGD) form a coiled coil. The tract at residues 952-985 (VQAELRELELRIEAARERLRSALLRRGELRAQLG) is involved in the trafficking and surface expression of NMDARs.

This sequence belongs to the glutamate-gated ion channel (TC 1.A.10.1) family. NR3B/GRIN3B subfamily. In terms of assembly, forms heterotetrameric channels that contain at least two GluN1 subunits and at least a combination of one GluN2 and one GluN3 subunits (in vitro). Forms heterotetrameric channels composed of two GluN1/zeta subunits (GRIN1), and two identical GluN3 subunits (GRIN3A or GRIN3B) (in vitro). Does not form functional homomeric channels. As to expression, expressed in the facial nucleus and the ambiguus nucleus of the brainstem, pons, medulla, spinal cord and cerebellum.

It is found in the cell membrane. It localises to the postsynaptic cell membrane. It carries out the reaction Ca(2+)(in) = Ca(2+)(out). The catalysed reaction is Na(+)(in) = Na(+)(out). Component of a non-conventional N-methyl-D-aspartate (NMDA) receptors (NMDARs) that function as heterotetrameric, ligand-gated cation channels with low calcium permeability and low voltage-dependent block by Mg(2+). Forms glutamatergic receptor complexes with GluN1 and GluN2 subunits which are activated by glycine binding to the GluN1 and GluN3 subunits and L-glutamate binding to GluN2 subunits. Forms excitatory glycinergic receptor complexes with GluN1 alone which are activated by glycine binding to the GluN1 and GluN3 subunits. GluN3B subunit also binds D-serine and, in the absence of glycine, activates glycinergic receptor complexes, but with lower efficacy than glycine. Each GluN3 subunit confers differential attributes to channel properties, including activation, deactivation and desensitization kinetics, pH sensitivity, Ca2(+) permeability, and binding to allosteric modulators. The protein is Glutamate receptor ionotropic, NMDA 3B of Mus musculus (Mouse).